Here is a 193-residue protein sequence, read N- to C-terminus: Dihydrofolate reductase (193 aa).

In terms of domain architecture, DHFR spans 1-193 (MIKLVFRYSP…VTTLTESVYK (193 aa)). NADP(+)-binding positions include Arg7, 22–27 (FGLGDG), 52–55 (GAKT), and 73–77 (DLARD).

It belongs to the dihydrofolate reductase family.

The catalysed reaction is (6S)-5,6,7,8-tetrahydrofolate + NADP(+) = 7,8-dihydrofolate + NADPH + H(+). Its pathway is cofactor biosynthesis; tetrahydrofolate biosynthesis; 5,6,7,8-tetrahydrofolate from 7,8-dihydrofolate: step 1/1. Key enzyme in folate metabolism. Catalyzes an essential reaction for de novo glycine and purine synthesis, and for DNA precursor synthesis. The chain is Dihydrofolate reductase (frd) from Escherichia coli (Bacteriophage T4).